Consider the following 186-residue polypeptide: Threonylcarbamoyl-AMP synthase (186 aa).

A YrdC-like domain is found at 1-186; the sequence is MADTWEAAHS…LNNQVFRDDA (186 aa).

The protein belongs to the SUA5 family. TsaC subfamily.

It is found in the cytoplasm. It carries out the reaction L-threonine + hydrogencarbonate + ATP = L-threonylcarbamoyladenylate + diphosphate + H2O. Its function is as follows. Required for the formation of a threonylcarbamoyl group on adenosine at position 37 (t(6)A37) in tRNAs that read codons beginning with adenine. Catalyzes the conversion of L-threonine, HCO(3)(-)/CO(2) and ATP to give threonylcarbamoyl-AMP (TC-AMP) as the acyladenylate intermediate, with the release of diphosphate. The protein is Threonylcarbamoyl-AMP synthase of Idiomarina loihiensis (strain ATCC BAA-735 / DSM 15497 / L2-TR).